The following is a 316-amino-acid chain: uncharacterized protein (316 aa).

The next 4 helical transmembrane spans lie at 74-94 (IPVL…GMAI), 99-119 (WPYA…IFLG), 166-186 (MAGC…TVLG), and 188-208 (VEGF…GYIF).

It localises to the cell membrane. This is an uncharacterized protein from Synechocystis sp. (strain ATCC 27184 / PCC 6803 / Kazusa).